The following is a 416-amino-acid chain: Serine hydroxymethyltransferase (416 aa).

Residues Leu119 and 123–125 (GHL) each bind (6S)-5,6,7,8-tetrahydrofolate. Position 228 is an N6-(pyridoxal phosphate)lysine (Lys228).

The protein belongs to the SHMT family. Homodimer. Pyridoxal 5'-phosphate serves as cofactor.

It is found in the cytoplasm. It catalyses the reaction (6R)-5,10-methylene-5,6,7,8-tetrahydrofolate + glycine + H2O = (6S)-5,6,7,8-tetrahydrofolate + L-serine. The protein operates within one-carbon metabolism; tetrahydrofolate interconversion. It participates in amino-acid biosynthesis; glycine biosynthesis; glycine from L-serine: step 1/1. Catalyzes the reversible interconversion of serine and glycine with tetrahydrofolate (THF) serving as the one-carbon carrier. This reaction serves as the major source of one-carbon groups required for the biosynthesis of purines, thymidylate, methionine, and other important biomolecules. Also exhibits THF-independent aldolase activity toward beta-hydroxyamino acids, producing glycine and aldehydes, via a retro-aldol mechanism. The chain is Serine hydroxymethyltransferase from Moorella thermoacetica (strain ATCC 39073 / JCM 9320).